The following is a 284-amino-acid chain: NADH-cytochrome b5 reductase 1 (284 aa).

A helical membrane pass occupies residues Lys-7–Pro-27. The region spanning Asn-38–Glu-142 is the FAD-binding FR-type domain. FAD is bound by residues Gly-122–Gly-137 and His-148–Leu-180.

It belongs to the flavoprotein pyridine nucleotide cytochrome reductase family. In terms of assembly, monomer. Component of the 2-(3-amino-3-carboxypropyl)histidine synthase complex composed of DPH1, DPH2, KTI11/DPH3 and a NADH-dependent reductase, predominantly CBR1. Interacts with KTI11/DPH3. Interacts with STE20. Requires FAD as cofactor.

It is found in the mitochondrion outer membrane. It carries out the reaction 2 Fe(III)-[cytochrome b5] + NADH = 2 Fe(II)-[cytochrome b5] + NAD(+) + H(+). The enzyme catalyses 2 Fe(3+)-[Dph3] + NADH = 2 Fe(2+)-[Dph3] + NAD(+) + H(+). The protein operates within protein modification; peptidyl-diphthamide biosynthesis. Competitively inhibited by NAD(+). Inhibited by mercurials such as p-chloromercuribenzoate (PCMB) and HgCl(2). Enzymatic activity increases under anaerobic conditions. Functionally, NADH-dependent reductase for KTI11/DPH3 and cytochrome b5. Required for the first step of diphthamide biosynthesis, a post-translational modification of histidine which occurs in elongation factor 2. DPH1 and DPH2 transfer a 3-amino-3-carboxypropyl (ACP) group from S-adenosyl-L-methionine (SAM) to a histidine residue, the reaction is assisted by a reduction system comprising KTI11/DPH3 and a NADH-dependent reductase, predominantly CBR1. By reducing KTI11/DPH3, also involved in the formation of the tRNA wobble base modification mcm5s 2U (5-methoxycarbonylmethyl-2-thiouridine), mediated by the elongator complex. The cytochrome b5/NADH cytochrome b5 reductase electron transfer system supports the catalytic activity of several sterol biosynthetic enzymes. Plays a role in bud morphology. This chain is NADH-cytochrome b5 reductase 1 (CBR1), found in Saccharomyces cerevisiae (strain ATCC 204508 / S288c) (Baker's yeast).